The following is a 345-amino-acid chain: Splicing factor YJU2 (345 aa).

Zn(2+)-binding residues include cysteine 43, cysteine 46, cysteine 80, and cysteine 83. The tract at residues 205–345 (KRLRDSDSEE…YSDSDDSSSD (141 aa)) is disordered. The span at 217 to 232 (ENAKERSKKHIADKPT) shows a compositional bias: basic and acidic residues. Composition is skewed to low complexity over residues 308-317 (SSITSSSASS) and 327-337 (GSSLGLLGAYS).

The protein belongs to the CWC16 family. YJU2 subfamily. As to quaternary structure, component of the spliceosome. Present in the activated B complex, the catalytically activated B* complex which catalyzes the branching, the catalytic step 1 C complex catalyzing the exon ligation, and the postcatalytic P complex containing the ligated exons (mRNA) and the excised lariat intron.

The protein resides in the nucleus. Its function is as follows. Part of the spliceosome which catalyzes two sequential transesterification reactions, first the excision of the non-coding intron from pre-mRNA and then the ligation of the coding exons to form the mature mRNA. Plays a role in stabilizing the structure of the spliceosome catalytic core and docking of the branch helix into the active site, producing 5'-exon and lariat intron-3'-intermediates. May protect cells from TP53-dependent apoptosis upon dsDNA break damage through association with PRP19-CD5L complex. This Danio rerio (Zebrafish) protein is Splicing factor YJU2.